Reading from the N-terminus, the 102-residue chain is Keratin-associated protein 25-1 (102 aa).

It belongs to the PMG family. As to quaternary structure, interacts with hair keratins.

In the hair cortex, hair keratin intermediate filaments are embedded in an interfilamentous matrix, consisting of hair keratin-associated proteins (KRTAP), which are essential for the formation of a rigid and resistant hair shaft through their extensive disulfide bond cross-linking with abundant cysteine residues of hair keratins. The matrix proteins include the high-sulfur and high-glycine-tyrosine keratins. In Homo sapiens (Human), this protein is Keratin-associated protein 25-1 (KRTAP25-1).